The sequence spans 217 residues: Ras-related protein Rab-19 (217 aa).

S26, V28, G29, K30, T31, C32, Y42, S43, E44, S45, and T49 together coordinate GTP. T31 contacts Mg(2+). Positions 39 to 54 match the Switch 1 motif; that stretch reads SGVYSESQQNTIGVDF. Mg(2+)-binding residues include T49 and D72. Positions 74-89 match the Switch 2 motif; that stretch reads AGQERFRTITQSYYRS. G75, N130, K131, D133, S161, A162, and K163 together coordinate GTP. S-geranylgeranyl cysteine attachment occurs at residues C215 and C217. Cysteine methyl ester is present on C217.

This sequence belongs to the small GTPase superfamily. Rab family. Requires Mg(2+) as cofactor. In terms of tissue distribution, expressed in a tissue-specific manner. Detected at high levels in intestine, lung and spleen, and at a lower level in kidney.

The protein resides in the cell membrane. It catalyses the reaction GTP + H2O = GDP + phosphate + H(+). Its activity is regulated as follows. Regulated by guanine nucleotide exchange factors (GEFs) which promote the exchange of bound GDP for free GTP. Regulated by GTPase activating proteins (GAPs) which increase the GTP hydrolysis activity. Inhibited by GDP dissociation inhibitors (GDIs). The small GTPases Rab are key regulators of intracellular membrane trafficking, from the formation of transport vesicles to their fusion with membranes. Rabs cycle between an inactive GDP-bound form and an active GTP-bound form that is able to recruit to membranes different set of downstream effectors directly responsible for vesicle formation, movement, tethering and fusion. The protein is Ras-related protein Rab-19 of Mus musculus (Mouse).